A 100-amino-acid polypeptide reads, in one-letter code: Urease subunit gamma (100 aa).

Belongs to the urease gamma subunit family. Heterotrimer of UreA (gamma), UreB (beta) and UreC (alpha) subunits. Three heterotrimers associate to form the active enzyme.

Its subcellular location is the cytoplasm. It carries out the reaction urea + 2 H2O + H(+) = hydrogencarbonate + 2 NH4(+). The protein operates within nitrogen metabolism; urea degradation; CO(2) and NH(3) from urea (urease route): step 1/1. In Mycobacterium sp. (strain JLS), this protein is Urease subunit gamma.